An 841-amino-acid polypeptide reads, in one-letter code: Translation initiation factor IF-2 (841 aa).

The segment at 87–254 (RKKKVFVQRS…KRNAHGFQSP (168 aa)) is disordered. A compositionally biased stretch (basic and acidic residues) spans 96–135 (SPEEIEAERKREMDERRAVENAARQKAEEEAKRRAEEDAR). A compositionally biased stretch (low complexity) spans 136–175 (SQPAASQSAPAAAEPVAAAEPVREAAPAAAPAPASAAPSA). Basic and acidic residues-rich tracts occupy residues 176–217 (DARK…EKAP) and 225–234 (TTDEESDSFR). Positions 235–248 (RGGRGKGKLKKRNA) are enriched in basic residues. Residues 341 to 510 (SRAPVVTVMG…LLQAEVLELK (170 aa)) form the tr-type G domain. Positions 350-357 (GHVDHGKT) are G1. 350–357 (GHVDHGKT) is a GTP binding site. The G2 stretch occupies residues 375–379 (GITQH). A G3 region spans residues 396 to 399 (DTPG). GTP-binding positions include 396-400 (DTPGH) and 450-453 (NKID). The G4 stretch occupies residues 450–453 (NKID). The segment at 486–488 (SAK) is G5.

This sequence belongs to the TRAFAC class translation factor GTPase superfamily. Classic translation factor GTPase family. IF-2 subfamily.

The protein localises to the cytoplasm. Functionally, one of the essential components for the initiation of protein synthesis. Protects formylmethionyl-tRNA from spontaneous hydrolysis and promotes its binding to the 30S ribosomal subunits. Also involved in the hydrolysis of GTP during the formation of the 70S ribosomal complex. The sequence is that of Translation initiation factor IF-2 from Pseudomonas syringae pv. syringae (strain B728a).